The sequence spans 143 residues: Large ribosomal subunit protein uL13 (143 aa).

It belongs to the universal ribosomal protein uL13 family. In terms of assembly, part of the 50S ribosomal subunit.

Its function is as follows. This protein is one of the early assembly proteins of the 50S ribosomal subunit, although it is not seen to bind rRNA by itself. It is important during the early stages of 50S assembly. The polypeptide is Large ribosomal subunit protein uL13 (Prochlorococcus marinus (strain MIT 9312)).